The primary structure comprises 496 residues: uncharacterized protein (496 aa).

The first 19 residues, 1-19 (MTTGYILIAAILILGGVIA), serve as a signal peptide directing secretion. A helical transmembrane segment spans residues 45-67 (AVLVTILTGGLVSATTLAILFIA). Residues 113–137 (LETTRTDKKQVETQRDQAKKEKLKA) form a disordered region.

Its subcellular location is the membrane. This is an uncharacterized protein from Nostoc sp. (strain PCC 7120 / SAG 25.82 / UTEX 2576).